The chain runs to 247 residues: MTPFWIALQFLTVLPIELKTIPTAQQNGRAILFYPLVGLIIGGILFLVTCIFVKLPALLLAAIVLALWIWLTGGLHLDGLADTADAWVGGFGDKLRTLQIMKDPSCGPIGVLSLVIICLLKFALVYVLIEQHQSLFLICIPILGRVVPSILFLTTPYVREKGLGRSLTDHLPKTASWIITGFVLLLPLYWGWQGLIAIIGFLISLVYLRHVFIKRIGGITGDTVGAAIEIGETVLMFTFVVSYFYLV.

A run of 6 helical transmembrane segments spans residues 31–51, 55–75, 109–129, 135–155, 183–203, and 227–247; these read ILFY…VTCI, LPAL…TGGL, IGVL…YVLI, LFLI…FLTT, VLLL…GFLI, and AIEI…FYLV.

This sequence belongs to the CobS family. Mg(2+) is required as a cofactor.

Its subcellular location is the cell inner membrane. The catalysed reaction is alpha-ribazole + adenosylcob(III)inamide-GDP = adenosylcob(III)alamin + GMP + H(+). The enzyme catalyses alpha-ribazole 5'-phosphate + adenosylcob(III)inamide-GDP = adenosylcob(III)alamin 5'-phosphate + GMP + H(+). It functions in the pathway cofactor biosynthesis; adenosylcobalamin biosynthesis; adenosylcobalamin from cob(II)yrinate a,c-diamide: step 7/7. In terms of biological role, joins adenosylcobinamide-GDP and alpha-ribazole to generate adenosylcobalamin (Ado-cobalamin). Also synthesizes adenosylcobalamin 5'-phosphate from adenosylcobinamide-GDP and alpha-ribazole 5'-phosphate. This Acinetobacter baumannii (strain ATCC 17978 / DSM 105126 / CIP 53.77 / LMG 1025 / NCDC KC755 / 5377) protein is Adenosylcobinamide-GDP ribazoletransferase.